A 278-amino-acid polypeptide reads, in one-letter code: S-adenosylmethionine decarboxylase proenzyme (278 aa).

Positions 96–115 are disordered; that stretch reads LTPESLTGESPGPLPGNKPS. The Schiff-base intermediate with substrate; via pyruvic acid role is filled by Ser-126. Ser-126 is subject to Pyruvic acid (Ser); by autocatalysis. Residue His-131 is the Proton acceptor; for processing activity of the active site. Cys-154 functions as the Proton donor; for catalytic activity in the catalytic mechanism.

The protein belongs to the prokaryotic AdoMetDC family. Type 2 subfamily. In terms of assembly, heterooctamer of four alpha and four beta chains arranged as a tetramer of alpha/beta heterodimers. Pyruvate serves as cofactor. Is synthesized initially as an inactive proenzyme. Formation of the active enzyme involves a self-maturation process in which the active site pyruvoyl group is generated from an internal serine residue via an autocatalytic post-translational modification. Two non-identical subunits are generated from the proenzyme in this reaction, and the pyruvate is formed at the N-terminus of the alpha chain, which is derived from the carboxyl end of the proenzyme. The post-translation cleavage follows an unusual pathway, termed non-hydrolytic serinolysis, in which the side chain hydroxyl group of the serine supplies its oxygen atom to form the C-terminus of the beta chain, while the remainder of the serine residue undergoes an oxidative deamination to produce ammonia and the pyruvoyl group blocking the N-terminus of the alpha chain.

The catalysed reaction is S-adenosyl-L-methionine + H(+) = S-adenosyl 3-(methylsulfanyl)propylamine + CO2. It functions in the pathway amine and polyamine biosynthesis; S-adenosylmethioninamine biosynthesis; S-adenosylmethioninamine from S-adenosyl-L-methionine: step 1/1. Its function is as follows. Catalyzes the decarboxylation of S-adenosylmethionine to S-adenosylmethioninamine (dcAdoMet), the propylamine donor required for the synthesis of the polyamines spermine and spermidine from the diamine putrescine. The protein is S-adenosylmethionine decarboxylase proenzyme of Alkaliphilus metalliredigens (strain QYMF).